The following is a 140-amino-acid chain: MLSPKRTRFRKQHRGRMKGVSTRGNRICFGKFALQALEPAWITARQIEAGRRVIARYARRGGKMWIRIFPDKPITMRPAETRMGSGKGSPEYWVAVVKKGRILYEINGVSEKMAQAAMKIAAHKMPIHTKFITLSQLTNG.

The protein belongs to the universal ribosomal protein uL16 family. Part of the 50S ribosomal subunit.

Its subcellular location is the plastid. The protein resides in the chloroplast. This Psilotum nudum (Whisk fern) protein is Large ribosomal subunit protein uL16c.